A 901-amino-acid polypeptide reads, in one-letter code: HTH-type transcriptional regulator MalT (901 aa).

39–46 (SPAGYGKT) is a binding site for ATP. The HTH luxR-type domain maps to 829-894 (ELIRTSPLTQ…AAVQHAQKLL (66 aa)). A DNA-binding region (H-T-H motif) is located at residues 853 to 872 (NEQIAGELEVAATTIKTHIR).

It belongs to the MalT family. In terms of assembly, monomer in solution. Oligomerizes to an active state in the presence of the positive effectors ATP and maltotriose.

Activated by ATP and maltotriose, which are both required for DNA binding. Functionally, positively regulates the transcription of the maltose regulon whose gene products are responsible for uptake and catabolism of malto-oligosaccharides. Specifically binds to the promoter region of its target genes, recognizing a short DNA motif called the MalT box. The sequence is that of HTH-type transcriptional regulator MalT from Escherichia coli O6:K15:H31 (strain 536 / UPEC).